Reading from the N-terminus, the 151-residue chain is Testis-expressed protein 29 (151 aa).

Over 1-56 (MEYVLEVKNSPRHLLKQFTVCDVPLYDICDYNVSRDRCQELGCCFYEGVCYKKAVP) the chain is Extracellular. A helical transmembrane segment spans residues 57–77 (IYIHVFSALIVIIAGAFVITI). At 78 to 151 (IYRVIQESRK…TITEAEETED (74 aa)) the chain is on the cytoplasmic side. The interval 100-151 (KSSEKAELASSSSKLGLKPASPGPPSAGPSMKSDEDKDDVTGTITEAEETED) is disordered. Low complexity predominate over residues 107–119 (LASSSSKLGLKPA).

It is found in the membrane. The sequence is that of Testis-expressed protein 29 (TEX29) from Homo sapiens (Human).